The primary structure comprises 360 residues: Protein Wnt-2 (360 aa).

The first 25 residues, Met1–Ser25, serve as a signal peptide directing secretion. 11 cysteine pairs are disulfide-bonded: Cys76/Cys87, Cys127/Cys135, Cys137/Cys157, Cys206/Cys220, Cys208/Cys215, Cys278/Cys309, Cys294/Cys304, Cys308/Cys348, Cys324/Cys339, Cys326/Cys336, and Cys331/Cys332. A lipid anchor (O-palmitoleoyl serine; by PORCN) is attached at Ser212. Residue Asn295 is glycosylated (N-linked (GlcNAc...) asparagine).

Belongs to the Wnt family. Palmitoleoylation is required for efficient binding to frizzled receptors. Depalmitoleoylation leads to Wnt signaling pathway inhibition.

The protein localises to the secreted. The protein resides in the extracellular space. Its subcellular location is the extracellular matrix. Functionally, ligand for members of the frizzled family of seven transmembrane receptors. Functions in the canonical Wnt signaling pathway that results in activation of transcription factors of the TCF/LEF family. Functions as a upstream regulator of FGF10 expression. Plays an important role in embryonic lung development. May contribute to embryonic brain development by regulating the proliferation of dopaminergic precursors and neurons. The sequence is that of Protein Wnt-2 (WNT2) from Otolemur garnettii (Small-eared galago).